The following is a 345-amino-acid chain: Dihydroorotase (345 aa).

Residues His-13 and His-15 each contribute to the Zn(2+) site. Substrate contacts are provided by residues 15–17 (HLR) and Asn-41. Positions 99, 136, and 174 each coordinate Zn(2+). At Lys-99 the chain carries N6-carboxylysine. His-136 contributes to the substrate binding site. A substrate-binding site is contributed by Leu-219. Asp-247 provides a ligand contact to Zn(2+). Asp-247 is an active-site residue. 2 residues coordinate substrate: His-251 and Ala-263.

This sequence belongs to the metallo-dependent hydrolases superfamily. DHOase family. Class II DHOase subfamily. Homodimer. Zn(2+) serves as cofactor.

The enzyme catalyses (S)-dihydroorotate + H2O = N-carbamoyl-L-aspartate + H(+). Its pathway is pyrimidine metabolism; UMP biosynthesis via de novo pathway; (S)-dihydroorotate from bicarbonate: step 3/3. Functionally, catalyzes the reversible cyclization of carbamoyl aspartate to dihydroorotate. This Acaryochloris marina (strain MBIC 11017) protein is Dihydroorotase.